Consider the following 684-residue polypeptide: Amino-acid acetyltransferase, mitochondrial (684 aa).

The disordered stretch occupies residues proline 414 to arginine 439. A compositionally biased stretch (polar residues) spans glutamine 415 to alanine 434. An N-acetyltransferase domain is found at glycine 505–proline 674.

The protein belongs to the acetyltransferase family.

It is found in the mitochondrion. The catalysed reaction is L-glutamate + acetyl-CoA = N-acetyl-L-glutamate + CoA + H(+). It functions in the pathway amino-acid biosynthesis; L-arginine biosynthesis; N(2)-acetyl-L-ornithine from L-glutamate: step 1/4. In terms of biological role, N-acetylglutamate synthase involved in arginine biosynthesis. The protein is Amino-acid acetyltransferase, mitochondrial (ARG2) of Ajellomyces capsulatus (strain NAm1 / WU24) (Darling's disease fungus).